The sequence spans 241 residues: Synaptogyrin (241 aa).

The MARVEL domain maps to 30 to 179 (FAMKPQVVIR…CALMAYKRFL (150 aa)). The next 4 helical transmembrane spans lie at 34–54 (PQVVIRALCWLFSVVVFGCIS), 81–101 (MVGVFGFLASMGFMGGEFLFE), 115–135 (ADMGFSALWTFMYFVAFLYLW), and 155–175 (TAIWFCLFSIVSWALCALMAY). The segment at 216-241 (ASPFGQPQQGGMEQQQSGMEYQQPTY) is disordered. Residues 220–241 (GQPQQGGMEQQQSGMEYQQPTY) show a composition bias toward low complexity.

This sequence belongs to the synaptogyrin family.

It localises to the cytoplasmic vesicle membrane. It is found in the cytoplasmic vesicle. The protein resides in the secretory vesicle membrane. The protein localises to the secretory vesicle. Its subcellular location is the synaptic vesicle membrane. Functionally, required for the correct formation of synaptic vesicles at nerve terminals and has a role in the regulation of the synaptic vesicle exo-endocytic cycle. The chain is Synaptogyrin from Drosophila melanogaster (Fruit fly).